Consider the following 443-residue polypeptide: UPF0597 protein DVU_0440 (443 aa).

The protein belongs to the UPF0597 family.

This Nitratidesulfovibrio vulgaris (strain ATCC 29579 / DSM 644 / CCUG 34227 / NCIMB 8303 / VKM B-1760 / Hildenborough) (Desulfovibrio vulgaris) protein is UPF0597 protein DVU_0440.